The primary structure comprises 364 residues: Guanine nucleotide-binding protein alpha-8 subunit (364 aa).

Gly2 carries N-myristoyl glycine lipidation. Cys5 is lipidated: S-palmitoyl cysteine. A G-alpha domain is found at 38 to 364 (KILKLLILGP…QHTMQKVGIQ (327 aa)). The tract at residues 41–54 (KLLILGPGESGKST) is G1 motif. Residues 46–53 (GPGESGKS), 186–192 (LKSRVPT), 211–215 (DVGGQ), 280–283 (NKID), and Ala336 contribute to the GTP site. Residues Ser53 and Thr192 each contribute to the Mg(2+) site. The G2 motif stretch occupies residues 184–192 (DILKSRVPT). Residues 207-216 (FRIFDVGGQR) are G3 motif. A G4 motif region spans residues 276 to 283 (ILFLNKID). Residues 334–339 (TCATDT) are G5 motif.

This sequence belongs to the G-alpha family. As to quaternary structure, g proteins are composed of 3 units; alpha, beta and gamma. The alpha chain contains the guanine nucleotide binding site.

Its function is as follows. Guanine nucleotide-binding proteins (G proteins) are involved as modulators or transducers in various transmembrane signaling systems. The protein is Guanine nucleotide-binding protein alpha-8 subunit (gpa-8) of Caenorhabditis elegans.